The primary structure comprises 417 residues: Phosphoglycerate kinase (417 aa).

Positions 23, 24, 25, 26, 38, 39, 62, 63, 65, 66, 122, 123, 170, and 171 each coordinate (2R)-3-phosphoglycerate. Residue G214 participates in ADP binding. G214 is a CDP binding site. A215 and K216 together coordinate AMP. Residue A215 coordinates ATP. Position 215 (A215) interacts with Mg(2+). A CDP-binding site is contributed by D219. A Mg(2+)-binding site is contributed by D219. K220 serves as a coordination point for AMP. K220 lines the ATP pocket. G238 is a binding site for ADP. G238 serves as a coordination point for CDP. Residues G239 and G313 each contribute to the AMP site. G239 and G313 together coordinate ATP. 3 residues coordinate CDP: G338, V340, and F343. F343 lines the ADP pocket. E344 contributes to the AMP binding site. ATP is bound by residues E344, D375, and T376. D375 is a binding site for Mg(2+).

The protein belongs to the phosphoglycerate kinase family. As to quaternary structure, monomer. Requires Mg(2+) as cofactor.

Its subcellular location is the cytoplasm. It carries out the reaction (2R)-3-phosphoglycerate + ATP = (2R)-3-phospho-glyceroyl phosphate + ADP. It participates in carbohydrate degradation; glycolysis; pyruvate from D-glyceraldehyde 3-phosphate: step 2/5. Functionally, catalyzes one of the two ATP producing reactions in the glycolytic pathway via the reversible conversion of 1,3-diphosphoglycerate to 3-phosphoglycerate. In addition to its role as a glycolytic enzyme, it seems that PGK-1 acts as a polymerase alpha cofactor protein (primer recognition protein). May play a role in sperm motility. In Gallus gallus (Chicken), this protein is Phosphoglycerate kinase (PGK).